Here is a 255-residue protein sequence, read N- to C-terminus: Glutamate racemase (255 aa).

Substrate-binding positions include 7 to 8 (DS) and 39 to 40 (YG). The Proton donor/acceptor role is filled by Cys-70. 71–72 (NT) is a binding site for substrate. Cys-181 (proton donor/acceptor) is an active-site residue. 182–183 (TH) contributes to the substrate binding site.

The protein belongs to the aspartate/glutamate racemases family. In terms of assembly, homodimer.

It catalyses the reaction L-glutamate = D-glutamate. The protein operates within cell wall biogenesis; peptidoglycan biosynthesis. Provides the (R)-glutamate required for cell wall biosynthesis. The polypeptide is Glutamate racemase (Helicobacter pylori (strain J99 / ATCC 700824) (Campylobacter pylori J99)).